The primary structure comprises 1273 residues: MEKTMFAYSWHQTDDETKNWSKSKESLRIYGITDDGKTICLIVNDFKPFVHVELPSSINWRQKIGGQPKVQKIMDYLNFILGDLKPVKNRTIFIDKYKLYGSNYVQTSPGVFQRKKFPYLVLFFESRKHIKNLEYKLKNTVDVPGFGKIKLNVRETNVSPILQLCVERNLPSAGWIGFKVEGRGALAGYGELVEEKKKFTDCDEEYVISKNYIYSIDKHVPVKAKVMAWDIEVYSEDGNFPDAMKPGNVVFQISCIFFIVGTSYKQKYLLTLGDPLEYTTTPINEEGCGKDTIVCKFKTEEDLIIAFSSLQKREKPHITTGWNIFNFDTTFLLKRAKLHRCLPNFLLQGFPKDQLGKEKEIKWQSKAYGTTDLKFIDCEGILCIDLMDVVQKEHKLDSYSLNFVAKHFLGSKKDDLKPKEIFICYREGIKKEVKNIVIHPLSNNLNIYLGKEEIMIENKKFKKPLKPFFRIQNTGKLVSDEDDSVFHVNYRGEVFSFLIAVHNEEKYEIKTVSEFNNYKNAYGTYTLSAQKAMAKVGKYCVQDSVLVADIFEHLQTWLSFSEMSRTCTTPIMTIHVHGQQVKFFNQVYKYCYDHKTVTDKETYKVDEKERYRGAEVFDPVPGLKRNVVPLDFASLYPSLIIARNMCYSTFVDNDDIPDEMCHVMEWDDHVACSHDPKVIRKNAITEELEKLKKIANAKKMYTQGTRTYKKMMCSYLVMENTKEKTEMSKHLKDLDRENNELLNIVNKQTPGYIESIKKKISDLTSERSEITKKLSKSVMCVSNRRYRFLKEPKGILPTIIQNLLDARKNTRTEIKNYKSRLALLMEKENKSKEDIDEITSIENLLPILDKRQNSYKISANSMYGATGVRVGALPFMPIAMCTTYMGRKSIVEVSQYLKELGGRVVYGDTDSNYVTFDDVVDKNVKVGTEEFSREMKKLWNHAIEIAKTISKKFDNPITLEFENAIYFKFLILTKKRYMYYTCGKDGNILMDANGKPKMGQRGVILSRRDNCKYMKDVYANVIDKIFDEQSENEILNGVVEKMLNLYTRQIEFTSCEKDENYLKNLIVTKSVGDYGGDKATFEPILGKNEKGEDKWKIGNYVVPLITDEIIKTCGTNGLPMTQNEIKDWYLERLPCQVQLEVKIKRRGHNKEEGQRLSYVVTDIGCKGKQSEKIESVEYFKTHSKVLKLDYGYYIERLIEPLDQVFQAVFKNCQEKETIYSDNFRKTKLFSIFEKRGKHSQANFTKELHKLCSVTKPKLINEIKSFSKPDLVFV.

Residues 679–837 (IRKNAITEEL…ENKSKEDIDE (159 aa)) adopt a coiled-coil conformation.

The protein belongs to the DNA polymerase type-B family.

It carries out the reaction DNA(n) + a 2'-deoxyribonucleoside 5'-triphosphate = DNA(n+1) + diphosphate. Its function is as follows. DNA-directed DNA polymerase involved in viral DNA replication. The protein is DNA polymerase 037L (DPOL) of Invertebrate iridescent virus 6 (IIV-6).